The sequence spans 230 residues: Large ribosomal subunit protein uL1 (230 aa).

The protein belongs to the universal ribosomal protein uL1 family. As to quaternary structure, part of the 50S ribosomal subunit.

In terms of biological role, binds directly to 23S rRNA. The L1 stalk is quite mobile in the ribosome, and is involved in E site tRNA release. Functionally, protein L1 is also a translational repressor protein, it controls the translation of the L11 operon by binding to its mRNA. The polypeptide is Large ribosomal subunit protein uL1 (Rubrobacter xylanophilus (strain DSM 9941 / JCM 11954 / NBRC 16129 / PRD-1)).